The sequence spans 334 residues: Protein-methionine-sulfoxide reductase catalytic subunit MsrP (334 aa).

Positions 1–44 (MKKNQFLKESDVTAESVFFMKRRQVLKALGISAAALSLPHAAHA) form a signal peptide, tat-type signal. Mo-molybdopterin-binding positions include asparagine 88, 91-92 (YE), cysteine 146, threonine 181, asparagine 233, arginine 238, and 249-251 (GIK).

Belongs to the MsrP family. In terms of assembly, heterodimer of a catalytic subunit (MsrP) and a heme-binding subunit (MsrQ). Requires Mo-molybdopterin as cofactor. Post-translationally, predicted to be exported by the Tat system. The position of the signal peptide cleavage has not been experimentally proven.

The protein localises to the periplasm. The enzyme catalyses L-methionyl-[protein] + a quinone + H2O = L-methionyl-(S)-S-oxide-[protein] + a quinol. It catalyses the reaction L-methionyl-[protein] + a quinone + H2O = L-methionyl-(R)-S-oxide-[protein] + a quinol. In terms of biological role, part of the MsrPQ system that repairs oxidized periplasmic proteins containing methionine sulfoxide residues (Met-O), using respiratory chain electrons. Thus protects these proteins from oxidative-stress damage caused by reactive species of oxygen and chlorine generated by the host defense mechanisms. MsrPQ is essential for the maintenance of envelope integrity under bleach stress, rescuing a wide series of structurally unrelated periplasmic proteins from methionine oxidation, including the primary periplasmic chaperone SurA and the lipoprotein Pal. The catalytic subunit MsrP is non-stereospecific, being able to reduce both (R-) and (S-) diastereoisomers of methionine sulfoxide. This is Protein-methionine-sulfoxide reductase catalytic subunit MsrP from Escherichia coli O127:H6 (strain E2348/69 / EPEC).